Consider the following 795-residue polypeptide: Histone acetyltransferase KAT2A (795 aa).

Residues 1-18 show a composition bias toward polar residues; that stretch reads MADPAAQSSAQPRLQQAQ. The disordered stretch occupies residues 1–55; that stretch reads MADPAAQSSAQPRLQQAQSSGPTGSNSNPGAGSSDPARPGLSQQQWSSQKKAQVR. Positions 19–34 are enriched in low complexity; that stretch reads SSGPTGSNSNPGAGSS. The N-acetyltransferase domain occupies 461-614; sequence VIGNSLSQKS…GATLMECELN (154 aa). Glu533 (proton donor/acceptor) is an active-site residue. Acetyl-CoA contacts are provided by residues 537 to 539, 544 to 550, and Tyr575; these read CAV and QVKGYGT. Succinyl-CoA contacts are provided by residues 537–539, 544–550, and Tyr575; these read CAV and QVKGYGT. Residues 597 to 606 form a loop 3 region; it reads LGYIKDYEGA. The Bromo domain maps to 686-790; the sequence is KDPDLLYNML…KFFYFKLKEA (105 aa).

The protein belongs to the acetyltransferase family. GCN5 subfamily.

The protein resides in the nucleus. It localises to the chromosome. The protein localises to the cytoplasm. It is found in the cytoskeleton. Its subcellular location is the microtubule organizing center. The protein resides in the centrosome. The catalysed reaction is L-lysyl-[histone] + acetyl-CoA = N(6)-acetyl-L-lysyl-[histone] + CoA + H(+). It catalyses the reaction L-lysyl-[protein] + acetyl-CoA = N(6)-acetyl-L-lysyl-[protein] + CoA + H(+). The enzyme catalyses succinyl-CoA + L-lysyl-[protein] = N(6)-succinyl-L-lysyl-[protein] + CoA + H(+). It carries out the reaction glutaryl-CoA + L-lysyl-[protein] = N(6)-glutaryl-L-lysyl-[protein] + CoA + H(+). Functionally, protein lysine acyltransferase that can act as a acetyltransferase, glutaryltransferasesucc, succinyltransferase or malonyltransferase, depending on the context. Acts as a histone lysine succinyltransferase: catalyzes succinylation of histone H3 on 'Lys-79' (H3K79succ), with a maximum frequency around the transcription start sites of genes. Succinylation of histones gives a specific tag for epigenetic transcription activation. Association with the 2-oxoglutarate dehydrogenase complex, which provides succinyl-CoA, is required for histone succinylation. In different complexes, functions either as an acetyltransferase (HAT) or as a succinyltransferase: in the SAGA and ATAC complexes, acts as a histone acetyltransferase. Has significant histone acetyltransferase activity with core histones, but not with nucleosome core particles. Has a a strong preference for acetylation of H3 at 'Lys-9' (H3K9ac). Acetylation of histones gives a specific tag for epigenetic transcription activation. Also acetylates non-histone proteins, such as tbx5. Involved in heart and limb development by mediating acetylation of tbx5. Together with kat2b, required for growth and differentiation of craniofacial cartilage and bone by regulating acetylation of histone H3 at 'Lys-9' (H3K9ac). Also acts as a histone glutaryltransferase: catalyzes glutarylation of histone H4 on 'Lys-91' (H4K91glu), a mark that destabilizes nucleosomes by promoting dissociation of the H2A-H2B dimers from nucleosomes. The polypeptide is Histone acetyltransferase KAT2A (Danio rerio (Zebrafish)).